We begin with the raw amino-acid sequence, 868 residues long: DNA mismatch repair protein MutS (868 aa).

620 to 627 contacts ATP; that stretch reads GPNMGGKS.

The protein belongs to the DNA mismatch repair MutS family.

Its function is as follows. This protein is involved in the repair of mismatches in DNA. It is possible that it carries out the mismatch recognition step. This protein has a weak ATPase activity. This Xylella fastidiosa (strain 9a5c) protein is DNA mismatch repair protein MutS.